The primary structure comprises 362 residues: MAGNTFGQLFRVTTFGESHGLALGAIVDGCPPGMELTEADLQGDLDRRKPGTSRFTTQRREDDEVKILSGVFEGKTTGTSIGLLIENTDQRSKDYSDIKDLFRPGHADYTYHQKYGIRDYRGGGRSSARETAMRVAAGAIAKKYLKEHCGIEIFGYLEQLGPIKAERFDKSIIENNPFFFADPDKLDELDAYMRDLKKQGDSIGAKLKVIATGVPVGLGEPVFDRLDAEIAHAMMGINAVKGVEVGDGFAVVEQHGSEHRDPMRPDGFLSNHAGGILGGISSGQEIVVGLALKPTSSIMVPGETIDKQGNPAEMVTRGRHDPCVGIRAVPIAEAMLALVLMDHLLRHRAQNFDVVTETPKLK.

NADP(+) contacts are provided by arginine 48 and arginine 54. FMN is bound by residues 125-127 (RSS), 238-239 (NA), glycine 278, 293-297 (KPTSS), and arginine 319.

Belongs to the chorismate synthase family. In terms of assembly, homotetramer. FMNH2 serves as cofactor.

It catalyses the reaction 5-O-(1-carboxyvinyl)-3-phosphoshikimate = chorismate + phosphate. The protein operates within metabolic intermediate biosynthesis; chorismate biosynthesis; chorismate from D-erythrose 4-phosphate and phosphoenolpyruvate: step 7/7. In terms of biological role, catalyzes the anti-1,4-elimination of the C-3 phosphate and the C-6 proR hydrogen from 5-enolpyruvylshikimate-3-phosphate (EPSP) to yield chorismate, which is the branch point compound that serves as the starting substrate for the three terminal pathways of aromatic amino acid biosynthesis. This reaction introduces a second double bond into the aromatic ring system. The sequence is that of Chorismate synthase from Tolumonas auensis (strain DSM 9187 / NBRC 110442 / TA 4).